The chain runs to 152 residues: Cytochrome c-type biogenesis protein CcmE (152 aa).

Topologically, residues 1–9 (MRGLKKQRR) are cytoplasmic. Residues 10-30 (IQILIVAAVALTLSSVLIGYA) form a helical; Signal-anchor for type II membrane protein membrane-spanning segment. Residues 31 to 152 (LRDGINFFRP…PDGYARDGDS (122 aa)) lie on the Periplasmic side of the membrane. The heme site is built by histidine 123 and tyrosine 127.

Belongs to the CcmE/CycJ family.

It localises to the cell inner membrane. Heme chaperone required for the biogenesis of c-type cytochromes. Transiently binds heme delivered by CcmC and transfers the heme to apo-cytochromes in a process facilitated by CcmF and CcmH. The polypeptide is Cytochrome c-type biogenesis protein CcmE (Jannaschia sp. (strain CCS1)).